The sequence spans 557 residues: Acid-sensing ion channel 1B (557 aa).

Residues 1 to 98 (MVRITCTISF…SIRQGLWALV (98 aa)) lie on the Cytoplasmic side of the membrane. Positions 36–45 (KDGEQGKYQE) are enriched in basic and acidic residues. A disordered region spans residues 36–57 (KDGEQGKYQEEGDDPDAYDGPE). A compositionally biased stretch (acidic residues) spans 46 to 57 (EGDDPDAYDGPE). Residues 99 to 115 (FLLAISMFLLQVVDRVI) traverse the membrane as a helical segment. Residues 116–460 (YYLQYDYVTL…ETIEQKKAYE (345 aa)) lie on the Extracellular side of the membrane. 2 N-linked (GlcNAc...) asparagine glycosylation sites follow: Asn133 and Asn194. 7 cysteine pairs are disulfide-bonded: Cys142–Cys229, Cys207–Cys214, Cys325–Cys400, Cys343–Cys396, Cys347–Cys394, Cys356–Cys378, and Cys358–Cys370. N-linked (GlcNAc...) asparagine glycans are attached at residues Asn401 and Asn428. Residues 461-491 (LAGLLGDIGGQMGLFIGASILTILELFDYLY) traverse the membrane as a discontinuously helical segment. A GAS motif; ion selectivity filter motif is present at residues 477 to 479 (GAS). Over 492-557 (EVIKFKLCRC…GQGNFEDFTC (66 aa)) the chain is Cytoplasmic.

Belongs to the amiloride-sensitive sodium channel (TC 1.A.6) family. ASIC1 subfamily. In terms of assembly, homotrimer. Heterotrimer; with other ASIC proteins producing channel with different properties. As to expression, expressed in central nervous system.

It is found in the cell membrane. Its subcellular location is the postsynaptic cell membrane. It localises to the cell projection. The protein localises to the dendrite. It catalyses the reaction Na(+)(in) = Na(+)(out). The catalysed reaction is K(+)(in) = K(+)(out). The enzyme catalyses Li(+)(in) = Li(+)(out). It carries out the reaction Ca(2+)(in) = Ca(2+)(out). With respect to regulation, inhibited by the diuretic drug amiloride. Forms voltage-independent, pH-gated trimeric sodium channels that act as postsynaptic excitatory receptors in the nervous system, playing a crucial role in regulating synaptic plasticity, learning, and memory. Upon extracellular pH drop this channel elicits transient, fast activating, and completely desensitizing inward currents. Displays high selectivity for sodium ions but can also permit the permeation of other cations. The polypeptide is Acid-sensing ion channel 1B (asic1b) (Danio rerio (Zebrafish)).